Reading from the N-terminus, the 619-residue chain is Tyrosine-protein kinase ZAP-70 (619 aa).

An SH2 1 domain is found at 10–102; the sequence is FFYGSISRAE…GLPCNLRKPC (93 aa). An interdomain A region spans residues 103-162; the sequence is NRPSGLEPQPGVFDCLRDAMVRDYVRQTWKLEGEALEQAIISQAPQVEKLIATTAHERMP. The region spanning 163–254 is the SH2 2 domain; that stretch reads WYHSSLTREE…GLIYCLKEAC (92 aa). Y248 is modified (phosphotyrosine). The interval 255–337 is interdomain B; the sequence is PNSSASNASG…KKLFLKRDNL (83 aa). Residues 260–309 form a disordered region; that stretch reads SNASGAAAPTLPAHPSTLTHPQRRIDTLNSDGYTPEPARITSPDKPRPMP. Phosphoserine is present on S289. Y292 carries the phosphotyrosine modification. Residue Y315 is modified to Phosphotyrosine; by LCK. Y319 is modified (phosphotyrosine). The Protein kinase domain occupies 338–600; it reads LIADIELGCG…QRMRACYYSL (263 aa). Residues 345-352 and K369 each bind ATP; that span reads GCGNFGSV. The active-site Proton acceptor is D461. A phosphotyrosine mark is found at Y492 and Y493. K544 is covalently cross-linked (Glycyl lysine isopeptide (Lys-Gly) (interchain with G-Cter in ubiquitin)). K603 bears the N6-acetyllysine mark.

It belongs to the protein kinase superfamily. Tyr protein kinase family. SYK/ZAP-70 subfamily. In terms of assembly, interacts with CD247/CD3Z; this interaction docks ZAP70 at the stimulated TCR. Interacts with NFAM1. Interacts with adapter protein SLA; this interaction negatively regulates T-cell receptor signaling. Interacts with FCRL3. Interacts with VAV1. Interacts with CBL; this interaction promotes ubiquitination, internalization and subsequent degradation of CD247/CD3Z. Identified in a complex with CBL and UBE2L3. Interacts with SHB. Interacts with adapter protein SLA2; this interaction negatively regulates T-cell receptor signaling. Interacts with CBLB. Interacts (via SH2 domains) with RHOH; this interaction regulates ZAP70 subcellular localization. Interacts with DEF6. Interacts (ubiquitinated form) with OTUD7B and UBASH3B. In terms of processing, phosphorylated on tyrosine residues upon T-cell antigen receptor (TCR) stimulation. Phosphorylation of Tyr-315 and Tyr-319 are essential for ZAP70 positive function on T-lymphocyte activation whereas Tyr-292 has a negative regulatory role. Within the C-terminal kinase domain, Tyr-492 and Tyr-493 are phosphorylated after TCR induction, Tyr-492 playing a negative regulatory role and Tyr-493 a positive. Tyr-493 is dephosphorylated by PTN22. Ubiquitinated in response to T cell activation. Deubiquitinated by OTUD7B. In terms of tissue distribution, expressed in T- and natural killer cells. Also present in early thymocytes and pro/pre B-cells.

It is found in the cytoplasm. It localises to the cell membrane. It catalyses the reaction L-tyrosyl-[protein] + ATP = O-phospho-L-tyrosyl-[protein] + ADP + H(+). Its activity is regulated as follows. Activated by phosphorylation at Tyr-493 in the activation loop. Inhibited by staurosporine. In terms of biological role, tyrosine kinase that plays an essential role in regulation of the adaptive immune response. Regulates motility, adhesion and cytokine expression of mature T-cells, as well as thymocyte development. Also contributes to the development and activation of primary B-lymphocytes. When antigen presenting cells (APC) activate T-cell receptor (TCR), a serie of phosphorylations lead to the recruitment of ZAP70 to the doubly phosphorylated TCR component CD247/CD3Z through ITAM motif at the plasma membrane. This recruitment serves to localization to the stimulated TCR and to relieve its autoinhibited conformation. Release of ZAP70 active conformation is further stabilized by phosphorylation mediated by LCK. Subsequently, ZAP70 phosphorylates at least 2 essential adapter proteins: LAT and LCP2. In turn, a large number of signaling molecules are recruited and ultimately lead to lymphokine production, T-cell proliferation and differentiation. Furthermore, ZAP70 controls cytoskeleton modifications, adhesion and mobility of T-lymphocytes, thus ensuring correct delivery of effectors to the APC. ZAP70 is also required for TCR-CD247/CD3Z internalization and degradation through interaction with the E3 ubiquitin-protein ligase CBL and adapter proteins SLA and SLA2. Thus, ZAP70 regulates both T-cell activation switch on and switch off by modulating TCR expression at the T-cell surface. During thymocyte development, ZAP70 promotes survival and cell-cycle progression of developing thymocytes before positive selection (when cells are still CD4/CD8 double negative). Additionally, ZAP70-dependent signaling pathway may also contribute to primary B-cells formation and activation through B-cell receptor (BCR). The chain is Tyrosine-protein kinase ZAP-70 (ZAP70) from Homo sapiens (Human).